Here is a 350-residue protein sequence, read N- to C-terminus: Gene 40 protein (350 aa).

237 to 244 (AVKESGKT) contacts ATP.

The polypeptide is Gene 40 protein (40) (Bacillus phage SP01 (Bacteriophage SP01)).